The sequence spans 64 residues: Beta-defensin 1 (64 aa).

Positions 1–20 (MRLHHLLLVLFFLVLSAGSG) are cleaved as a signal peptide. Positions 21–26 (FTQGIR) are excised as a propeptide. 3 cysteine pairs are disulfide-bonded: cysteine 31–cysteine 60, cysteine 38–cysteine 53, and cysteine 43–cysteine 61.

The protein belongs to the beta-defensin family. In terms of assembly, monomer. Homodimer.

It localises to the secreted. The protein resides in the membrane. Has bactericidal activity. May act as a ligand for C-C chemokine receptor CCR6. Positively regulates the sperm motility and bactericidal activity in a CCR6-dependent manner. Binds to CCR6 and triggers Ca2+ mobilization in the sperm which is important for its motility. The sequence is that of Beta-defensin 1 (DEFB1) from Capra hircus (Goat).